Here is a 360-residue protein sequence, read N- to C-terminus: Peptide chain release factor 1 (360 aa).

An N5-methylglutamine modification is found at Gln235. A disordered region spans residues Ala284–Pro313.

Belongs to the prokaryotic/mitochondrial release factor family. Methylated by PrmC. Methylation increases the termination efficiency of RF1.

The protein localises to the cytoplasm. Peptide chain release factor 1 directs the termination of translation in response to the peptide chain termination codons UAG and UAA. This is Peptide chain release factor 1 from Salmonella gallinarum (strain 287/91 / NCTC 13346).